A 463-amino-acid polypeptide reads, in one-letter code: ATP sulfurylase 1, chloroplastic (463 aa).

Residues Met1–Ala48 constitute a chloroplast transit peptide.

Belongs to the sulfate adenylyltransferase family. As to quaternary structure, homotetramer.

It is found in the plastid. The protein resides in the chloroplast stroma. It carries out the reaction sulfate + ATP + H(+) = adenosine 5'-phosphosulfate + diphosphate. Its pathway is sulfur metabolism; hydrogen sulfide biosynthesis; sulfite from sulfate: step 1/3. Functionally, mediates selenate (Se) reduction, and promotes Se and sulfur (S) uptake and assimilation. The chain is ATP sulfurylase 1, chloroplastic (APS1) from Arabidopsis thaliana (Mouse-ear cress).